Reading from the N-terminus, the 426-residue chain is Synaptotagmin-13 (426 aa).

The Vesicular segment spans residues 1 to 6; sequence MVLSVP. The helical transmembrane segment at 7-29 threads the bilayer; that stretch reads VIALGATLGTATSILALCGVTCL. Over 30–426 the chain is Cytoplasmic; that stretch reads CRHMHPKKGL…QIAMWHQLHL (397 aa). C2 domains follow at residues 158–275 and 287–422; these read QAPK…AQWG and GAGE…AMWH.

It belongs to the synaptotagmin family. As to quaternary structure, interacts with NRXN1. Expressed in brain, heart, spleen, lung and testis.

Its subcellular location is the cytoplasmic vesicle membrane. Its function is as follows. May be involved in transport vesicle docking to the plasma membrane. In Mus musculus (Mouse), this protein is Synaptotagmin-13 (Syt13).